The following is a 1033-amino-acid chain: NACHT, LRR and PYD domains-containing protein 3 (1033 aa).

A Pyrin domain is found at Met1–Glu91. Ser3 is subject to Phosphoserine. A disulfide bridge links Cys6 with Cys104. Tyr11 bears the Phosphotyrosine mark. Cys126 is lipidated: S-palmitoyl cysteine. Residues Lys127–Lys130 are required for binding to phosphatidylinositol 4-phosphate (PtdIns4P). Phosphotyrosine; by BTK is present on residues Tyr132, Tyr136, and Tyr145. The region spanning Tyr136–Glu206 is the FISNA domain. At Ser157 the chain carries Phosphoserine. Tyr164 carries the post-translational modification Phosphotyrosine; by BTK. Thr165 is a binding site for ATP. Ser194 carries the phosphoserine; by MAPK8 modification. At Ser197 the chain carries Phosphoserine. The NACHT domain maps to His216–Leu532. Gly222–Ile230 serves as a coordination point for ATP. The residue at position 261 (Ser261) is a Phosphoserine. At Ser291 the chain carries Phosphoserine; by PKD/PRKD1. Lys320 is covalently cross-linked (Glycyl lysine isopeptide (Lys-Gly) (interchain with G-Cter in ubiquitin)). Ser330 carries the post-translational modification Phosphoserine. The short motif at Leu351 to Gln355 is the KFERQ-like motif 1 element. A Glycyl lysine isopeptide (Lys-Gly) (interchain with G-Cter in ubiquitin) cross-link involves residue Lys426. His518 lines the ATP pocket. The short motif at Gln601–Glu605 is the KFERQ-like motif 2 element. A Glycyl lysine isopeptide (Lys-Gly) (interchain with G-Cter in ubiquitin) cross-link involves residue Lys687. Ser725 and Ser732 each carry phosphoserine. 5 LRR repeats span residues Ser739 to Cys759, Asn768 to Ser789, Lys796 to Cys816, Asn825 to Leu846, and Ser853 to Cys873. A KFERQ-like motif 3 motif is present at residues Gln795–Glu799. A Phosphoserine; by CSNK1A1 modification is found at Ser803. Residues Cys834, Cys835, and Cys841 are each lipidated (S-palmitoyl cysteine). Tyr858 is modified (phosphotyrosine). Lys875 is covalently cross-linked (Glycyl lysine isopeptide (Lys-Gly) (interchain with G-Cter in ubiquitin)). LRR repeat units follow at residues Asn882 to Ser903, Asn910 to Cys930, Lys939 to Thr960, and Ser967 to Glu988. The S-palmitoyl cysteine moiety is linked to residue Cys955. Lys970 is covalently cross-linked (Glycyl lysine isopeptide (Lys-Gly) (interchain with G-Cter in ubiquitin)). The short motif at Glu988 to Gln992 is the KFERQ-like motif 4 element. Ser1032 is subject to Phosphoserine.

The protein belongs to the NLRP family. As to quaternary structure, sensor component of NLRP3 inflammasomes; inflammasomes are supramolecular complexes that assemble in the cytosol in response to pathogens and other damage-associated signals and play critical roles in innate immunity and inflammation. The core of NLRP3 inflammasomes consists of a signal sensor component (NLRP3), an adapter (PYCARD/ASC), which recruits an effector pro-inflammatory caspase (CASP1 and, possibly, CASP4 and CASP5). Homodecamer; inactive NLRP3 forms homodecameric double-ring cages that hide pyrin domains within NACHT-LRR rings to avoid premature activation. Interacts (via pyrin domain) with PYCARD/ASC (via pyrin domain); interaction is direct. Interacts (via LRR repeat domain) with NEK7 (via N-terminus); the interaction is required for the formation of the complex NLRP3:PYCARD, oligomerization of PYCARD/ASC and activation of CASP1. Interacts (via LRR repeat domain) with NR4A1/Nur77 (via N-terminus); the interaction is direct, requires activation of NR4A1 by its ligands NBRE-containing dsDNA and lipopolysaccharide, and stimulates the association of NLRP3 with NEK7 for non-canonical NLRP3 inflammasome activation. Interacts with CARD8; leading to inhibit formation of the NLRP3 inflammasome. Interacts with MEFV; this interaction targets NLRP3 to degradation by autophagy, hence preventing excessive IL1B- and IL18-mediated inflammation. Interacts with EIF2AK2/PKR; this interaction requires EIF2AK2 activity, is accompanied by EIF2AK2 autophosphorylation and promotes inflammasome assembly in response to specific stimuli. Interacts with GBP5 (via DAPIN domain); this interaction promotes inflammasome assembly in response to microbial and soluble, but not crystalline, agents. Interacts with PML (isoform PML-1) (via the leucine-rich repeat (LRR) domain); PML-mediated increase in NLRP3 inflammasome activation does not depend upon this interaction. Interacts (via NACHT domain) with DHX33 (via DEAH box); NLRP3 activation in presence of cytosolic dsRNA is mediated by DHX33. Interacts (via NACHT and LRR domains) with ARRB2; this interaction is direct and inducible by polyunsaturated fatty acids (PUFAs). Interacts (via NACHT domain) with DDX3X under both LPS-primed and inflammasome-activating conditions. Interacts with IRF4 (via the LRR domain); this interaction is direct and is required for optimal IRF4 binding to IL4 promoter and efficient IL4 transactivation during differentiation of Th2 helper T-cells. Interacts with MAVS; promoting localization to mitochondria and activation of the NLRP3 inflammasome. Interacts with MARK4; promoting localization of NLRP3 to the microtubule organizing center (MTOC). Interacts with TRIM50; this interaction also promotes NLRP3 oligomerization and subsequent inflammasome activation. Interacts with IRGM; preventing NLRP3 inflammasome assembly and promoting NLRP3 degradation. Interacts (via KFERQ-like motifs) with HSPA8/HSC70; promoting NLRP3 degradation by the chaperone-mediated autophagy pathway. Interacts (via NACHT and LLR domains) with ABHD8; this interaction is enhanced in the presence of NLRP3 inflammasome inducers, such as ATP, nigericin, silica, or alum. Interaction with ABHD8 leads the recruitment of ZDHHC12, hence facilitating NLRP3 palmitoylation and degradation by the chaperone-mediated autophagy pathway (CMA), therefore attenuating NLRP3 inflammasome activation. Phosphorylation at Ser-194 by MAPK8/JNK1 increases inflammasome activation by promoting deubiquitination by BRCC3 and NLRP3 homooligomerization. Phosphorylation at Ser-803 by CSNK1A1 prevents inflammasome activation by preventing NEK7 recruitment. Phosphorylation at Ser-3 in the pyrin domain inhibits homomultimerization of NLRP3 and activation of the NLRP3 inflammasome: dephosphorylation by protein phosphatase 2A (PP2A) promotes assembly of the NLRP3 inflammasome. Phosphorylation at Ser-291 by PKD/PRKD1 promotes NLRP3 inflammasome assembly. Phosphorylation by ERK1/MAPK3 promotes NLRP3 inflammasome assembly. Phosphorylation by BTK (at Tyr-132, Tyr-136, Tyr-145 and Tyr-164) in the region that mediates binding to phosphatidylinositol phosphate, promotes relocalization of NLRP3 and assembly of the NLRP3 inflammasome. Phosphorylation at Tyr-858 inhibits NLRP3 inflammasome assembly: dephosphorylation by PTPN22 promotes inflammasome activation Phosphorylated by LATS1 and LATS2 at Ser-261 following palmitoylation by ZDHHC1, promoting its relocalization to the microtubule organizing center (MTOC), where NLRP3 is activated by NEK7, leading to inflammasome assembly and activation. In terms of processing, ubiquitinated; undergoes both 'Lys-48'- and 'Lys-63'-linked polyubiquitination. Ubiquitination does not lead to degradation, but inhibits inflammasome activation. Deubiquitination is catalyzed by BRCC3 and associated with NLRP3 activation and inflammasome assembly. This process can be induced by the activation of Toll-like receptors (by LPS), through a non-transcriptional pathway dependent on the mitochondrial production of reactive oxygen species, and by ATP. Ubiquitinated by TRIM31 via 'Lys-48'-linked ubiquitination, leading to its degradation by the proteasome. Ubiquitinated at Lys-687 by the SCF(FBXL2) complex, leading to its degradation by the proteasome. Ubiquitinated by TRIM35 via 'lys-48' and 'Lys-63'-linked ubiquitination leading to inhibition of NLRP3 inflammasome activation. Undergoes 'Lys-27'-linked polyubiquitination by MARCHF5, leading to NLRP3-NEK7 complex formation and NLRP3 oligomerization. Post-translationally, the disulfide bond in the pyrin domain might play a role in reactive oxygen species-mediated activation. Palmitoylation by ZDHHC12 promotes NLRP3 degradation by the chaperone-mediated autophagy pathway (CMA) and therefore limits NLRP3 inflammasome activation. Interaction with ZDHHC12, and hence NLRP3 palmitoylation, is enhanced by ABHD8. Following palmitoylation, HSPA8/HSC70 recognizes and binds the KFERQ-like motifs on NLRP3 and promotes NLRP3 recruitment to lysosomes, where it is degraded via the chaperone-mediated autophagy pathway in a LAMP2-dependent process. Palmitoylation at Cys-834 and Cys-835 by ZDHHC5 enhances its binding to NEK7 leading to inflammasome assembly and activation. Palmitoylation at Cys-126 and Cys-955 by ZDHHC1 facilitates phosphorylation at Ser-261 by LATS1 and LATS2, promoting its relocalization to the microtubule organizing center (MTOC), where NLRP3 is activated by NEK7, leading to inflammasome assembly and activation. Depalmitoylated by ABHD17A. In terms of processing, degraded via selective autophagy following interaction with Irgm1. Irgm1 promotes NLRP3 recruitment to autophagosome membranes, promoting its SQSTM1/p62-dependent autophagy-dependent degradation. In terms of tissue distribution, expressed with high levels in peripheral blood leukocytes, including Th2 lymphocytes and macrophages. Expressed at low levels in resting osteoblasts (at protein level).

Its subcellular location is the cytoplasm. The protein resides in the cytosol. The protein localises to the inflammasome. It localises to the cytoskeleton. It is found in the microtubule organizing center. Its subcellular location is the golgi apparatus membrane. The protein resides in the endoplasmic reticulum. The protein localises to the mitochondrion. It localises to the secreted. It is found in the nucleus. It carries out the reaction ATP + H2O = ADP + phosphate + H(+). Under resting conditions, NLRP3 binds ADP and is autoinhibited. Inactive NLRP3 forms homodecameric double-ring cages that hide pyrin domains within NACHT-LRR rings to avoid premature activation. NLRP3 activation stimuli include extracellular ATP, nigericin, reactive oxygen species, crystals of monosodium urate or cholesterol, amyloid-beta fibers, environmental or industrial particles and nanoparticles, such as asbestos, silica, aluminum salts, cytosolic dsRNA, etc. Almost all stimuli trigger intracellular K(+) efflux. These stimuli lead to membrane perturbations that induce activation of NLRP3. Upon activation, NLRP3 is transported to microtubule organizing center (MTOC), where it is unlocked by NEK7, leading to its relocalization to dispersed trans-Golgi network (dTGN) vesicle membranes and recruitment of PYCARD/ASC for the formation of an active inflammasome complex. NEK7-activated NLRP3 forms a disk-shaped inflammasome. NLRP3 and PYCARD/ASC interact via their respective pyrin domains; interaction initiates speck formation (nucleation) which greatly enhances further addition of soluble PYCARD/ASC molecules to the speck in a prion-like polymerization process. Clustered PYCARD/ASC nucleates the formation of CASP1 filaments through the interaction of their respective CARD domains, acting as a platform for CASP1 polymerization and activation. Active CASP1 then processes IL1B and IL18 precursors, leading to the release of mature cytokines in the extracellular milieu and inflammatory response. NLRP3 inflammasome assembly is inhibited by IRGM, which impedes NLRP3 oligomerization. NLRP3 inflammasome is inhibited by cyclic AMP (cAMP), which directly binds NLRP3; inhibition is relieved by calcium-sensing receptor CASR, which inhibits production of cAMP. Specifically inhibited by sulfonylurea MCC950 (also named CP-456,773, CRID3), a potent and specific small-molecule inhibitor of the NLRP3 inflammasome that acts by preventing ATP hydrolysis. Sensor component of the NLRP3 inflammasome, which mediates inflammasome activation in response to defects in membrane integrity, leading to secretion of inflammatory cytokines IL1B and IL18 and pyroptosis. In response to pathogens and other damage-associated signals that affect the integrity of membranes, initiates the formation of the inflammasome polymeric complex composed of NLRP3, CASP1 and PYCARD/ASC. Recruitment of pro-caspase-1 (proCASP1) to the NLRP3 inflammasome promotes caspase-1 (CASP1) activation, which subsequently cleaves and activates inflammatory cytokines IL1B and IL18 and gasdermin-D (GSDMD), promoting cytokine secretion and pyroptosis. Activation of NLRP3 inflammasome is also required for HMGB1 secretion; stimulating inflammatory responses. Under resting conditions, ADP-bound NLRP3 is autoinhibited. NLRP3 activation stimuli include extracellular ATP, nigericin, reactive oxygen species, crystals of monosodium urate or cholesterol, amyloid-beta fibers, environmental or industrial particles and nanoparticles, such as asbestos, silica, aluminum salts, cytosolic dsRNA, etc. Almost all stimuli trigger intracellular K(+) efflux. These stimuli lead to membrane perturbation and activation of NLRP3. Upon activation, NLRP3 is transported to microtubule organizing center (MTOC), where it is unlocked by NEK7, leading to its relocalization to dispersed trans-Golgi network (dTGN) vesicle membranes and formation of an active inflammasome complex. Associates with dTGN vesicle membranes by binding to phosphatidylinositol 4-phosphate (PtdIns4P). Shows ATPase activity. Functionally, independently of inflammasome activation, regulates the differentiation of T helper 2 (Th2) cells and has a role in Th2 cell-dependent asthma and tumor growth. During Th2 differentiation, required for optimal IRF4 binding to IL4 promoter and for IRF4-dependent IL4 transcription. Binds to the consensus DNA sequence 5'-GRRGGNRGAG-3'. May also participate in the transcription of IL5, IL13, GATA3, CCR3, CCR4 and MAF. The polypeptide is NACHT, LRR and PYD domains-containing protein 3 (Mus musculus (Mouse)).